Here is an 87-residue protein sequence, read N- to C-terminus: UPF0250 protein Spro_1197 (87 aa).

Belongs to the UPF0250 family.

The sequence is that of UPF0250 protein Spro_1197 from Serratia proteamaculans (strain 568).